Reading from the N-terminus, the 263-residue chain is Expansin-like A3 (263 aa).

Residues 1-20 (MRSFLYLIVVIFLFSSSVNA) form the signal peptide. The Expansin-like EG45 domain maps to 41 to 147 (SGACAYGPMA…QRVPCNYGKR (107 aa)). Residues Asn99 and Asn102 are each glycosylated (N-linked (GlcNAc...) asparagine). The region spanning 161–243 (NYLAIKLLYQ…NWNSGRIYDA (83 aa)) is the Expansin-like CBD domain.

It belongs to the expansin family. Expansin-like A subfamily.

Its subcellular location is the secreted. The chain is Expansin-like A3 (EXLA3) from Arabidopsis thaliana (Mouse-ear cress).